The primary structure comprises 696 residues: Chitin synthase regulator SKT5 (696 aa).

Disordered regions lie at residues 37-67 (GQDFSDNKENRENRDNEDFSTADLPKRSANQ) and 90-145 (QEED…IKKR). A compositionally biased stretch (basic and acidic residues) spans 41-53 (SDNKENRENRDNE). Residues 104–126 (LNNSNNTSLSSLGSTPTNSPSPG) are compositionally biased toward low complexity. Residues 129–139 (RQTNSSTSLTK) are compositionally biased toward polar residues. The residue at position 148 (Ser-148) is a Phosphoserine. Sel1-like repeat units lie at residues 271 to 306 (SDAQYLLADGYSSGAFGKIENKEAFVLFQAAAKHGH), 307 to 342 (IESAYRASHCLEEGLGTTRDSRKSVNFLKFAASRNH), 343 to 382 (PSAMYKLGLYSFYGRMGLPTDVNTKLNGVKWLSRAAARAN), 386 to 423 (AAAPYELAKIYHEGFLDVVIPDEKYAMELYIQAASLGH), 424 to 460 (VPSATLLAQIYETGNDTVGQDTSLSVHYYTQAALKGD), 461 to 498 (SVAMLGLCAWYLLGAEPAFEKDENEAFQWALRAANAGL), and 499 to 534 (PKAQFTLGYFYEHGKGCDRNMEYAWKWYEKAAGNED). Phosphoserine is present on residues Ser-561 and Ser-563. Residue Thr-564 is modified to Phosphothreonine. 3 stretches are compositionally biased toward polar residues: residues 576–593 (SNVGSNSRVSSKSETFFT), 605–634 (LQINMNSNTNRNGIKTGSDTSIRKSSSSAK), and 651–661 (VSLSNMGSSNM). The interval 576 to 696 (SNVGSNSRVS…GKKKKDCVIM (121 aa)) is disordered. Residues 662–675 (IRKDFPAVKTESKK) are compositionally biased toward basic and acidic residues. Residues 680-696 (KNKKDKQGKKKKDCVIM) are compositionally biased toward basic residues. Residue Cys-693 is modified to Cysteine methyl ester. The S-farnesyl cysteine moiety is linked to residue Cys-693. Residues 694-696 (VIM) constitute a propeptide, removed in mature form.

It belongs to the SKT5 family. As to quaternary structure, may interact with CHS3 and seems to be an adapter (along with BNI4) to link CHS3 to septins. Farnesylation is required for chitin synthase CHS3 activity but is not required for SKT5 membrane association.

The protein localises to the cell membrane. Functionally, activator of the chitin synthase CHS3 which polymerizes chitin, a structural polymer of the fungal cell wall. The sequence is that of Chitin synthase regulator SKT5 from Saccharomyces cerevisiae (strain ATCC 204508 / S288c) (Baker's yeast).